An 86-amino-acid chain; its full sequence is Large ribosomal subunit protein eL43 (86 aa).

The C4-type zinc-finger motif lies at 38-59 (CPVCGRKAVRRISTGIWQCQKC).

Belongs to the eukaryotic ribosomal protein eL43 family. The cofactor is Zn(2+).

This is Large ribosomal subunit protein eL43 from Thermococcus gammatolerans (strain DSM 15229 / JCM 11827 / EJ3).